The chain runs to 172 residues: UPF0102 protein Pcryo_2198 (172 aa).

The protein belongs to the UPF0102 family.

In Psychrobacter cryohalolentis (strain ATCC BAA-1226 / DSM 17306 / VKM B-2378 / K5), this protein is UPF0102 protein Pcryo_2198.